The primary structure comprises 151 residues: Small ribosomal subunit protein uS15 (151 aa).

This sequence belongs to the universal ribosomal protein uS15 family. Component of the small ribosomal subunit. Mature ribosomes consist of a small (40S) and a large (60S) subunit. The 40S subunit contains about 32 different proteins and 1 molecule of RNA (18S). The 60S subunit contains 45 different proteins and 3 molecules of RNA (25S, 5.8S and 5S).

Its subcellular location is the cytoplasm. Functionally, component of the ribosome, a large ribonucleoprotein complex responsible for the synthesis of proteins in the cell. The small ribosomal subunit (SSU) binds messenger RNAs (mRNAs) and translates the encoded message by selecting cognate aminoacyl-transfer RNA (tRNA) molecules. The large subunit (LSU) contains the ribosomal catalytic site termed the peptidyl transferase center (PTC), which catalyzes the formation of peptide bonds, thereby polymerizing the amino acids delivered by tRNAs into a polypeptide chain. The nascent polypeptides leave the ribosome through a tunnel in the LSU and interact with protein factors that function in enzymatic processing, targeting, and the membrane insertion of nascent chains at the exit of the ribosomal tunnel. This is Small ribosomal subunit protein uS15 (RPS13) from Candida albicans (strain SC5314 / ATCC MYA-2876) (Yeast).